Reading from the N-terminus, the 501-residue chain is Cobyric acid synthase (501 aa).

Residues 253-450 enclose the GATase cobBQ-type domain; it reads EIEIAVLKLP…LHGIFENGRW (198 aa). The Nucleophile role is filled by Cys-334. Residue His-442 is part of the active site.

It belongs to the CobB/CobQ family. CobQ subfamily.

The protein operates within cofactor biosynthesis; adenosylcobalamin biosynthesis. In terms of biological role, catalyzes amidations at positions B, D, E, and G on adenosylcobyrinic A,C-diamide. NH(2) groups are provided by glutamine, and one molecule of ATP is hydrogenolyzed for each amidation. The sequence is that of Cobyric acid synthase from Prochlorococcus marinus (strain MIT 9313).